Consider the following 533-residue polypeptide: MKASFFVFAISALQALQASVASAYSEVPGKRSVVLNLQHSQYDHVARKLERTKVLNKRDSSGYPVLDLEYTDAGGYFANLTLGSNERVYSLTLDTGSPYTWVTAKNITALSASEIWSDTDGVDAGRSTSDIRTNACTNYTCFDYSSTTARRTNSSTIGFLASYGDNTTVLGYNMVDNAYFAGLTLPGFEFGLATREYDSSQISVTPGIIGLSVAMTITGISSDDKVVAFTPPTIVDQLVSANVIDTPAFGIYLNEDVGELIFGGYDKAKINGSVHWVNISSSDDSTFYSVNLESITVTNSTSSNNVQSSKRSSKDIEVNTTVTLDTGTVYIYLPEDTVESIADQYQGIVSEYGYVVIYCDSFSDSDYISFNFGSDADFHVSVNDLVIYRQESTSGDICYLALFEGDTSSYLLGQYFLQYVYSIYDWDAQKIGLAALNSNATSTANHQILNINSALRSVTSGQSVSATPTVSMSIAATSFGSSLVLTASASPSSTSVDGSSSSDSSEASGAASVGVSISAIVLCASTLISLLFA.

An N-terminal signal peptide occupies residues 1-23; that stretch reads MKASFFVFAISALQALQASVASA. The Peptidase A1 domain maps to 76–434; it reads YFANLTLGSN…DWDAQKIGLA (359 aa). An N-linked (GlcNAc...) asparagine glycan is attached at Asn-79. Asp-94 is an active-site residue. 8 N-linked (GlcNAc...) asparagine glycosylation sites follow: Asn-106, Asn-138, Asn-153, Asn-166, Asn-271, Asn-278, Asn-299, and Asn-319. Asp-325 is a catalytic residue. A glycan (N-linked (GlcNAc...) asparagine) is linked at Asn-439.

Belongs to the peptidase A1 family.

Functionally, involved in degradation or processing of the mating pheromones. Its loss may cause a persistent response to the pheromones. It may cleave the mating pheromone M-factor. May be involved in processing of zymogens that are required for zygote formation. This chain is Aspartic proteinase sxa1 (sxa1), found in Schizosaccharomyces pombe (strain 972 / ATCC 24843) (Fission yeast).